The following is a 382-amino-acid chain: DnaJ homolog dnj-20 (382 aa).

The N-terminal stretch at 1 to 21 (MRILNVSLLVLTAFLVDFVEC) is a signal peptide. The J domain occupies 24–89 (DFYKILGVSK…EKRAMYDRHG (66 aa)).

This chain is DnaJ homolog dnj-20, found in Caenorhabditis briggsae.